The chain runs to 506 residues: Glutamate--tRNA ligase (506 aa).

Residues 14 to 24 (PSPTGYLHIGG) carry the 'HIGH' region motif. Residues 261-265 (KLSKR) carry the 'KMSKS' region motif. Residue lysine 264 participates in ATP binding.

The protein belongs to the class-I aminoacyl-tRNA synthetase family. Glutamate--tRNA ligase type 1 subfamily. In terms of assembly, monomer.

It is found in the cytoplasm. The catalysed reaction is tRNA(Glu) + L-glutamate + ATP = L-glutamyl-tRNA(Glu) + AMP + diphosphate. Its function is as follows. Catalyzes the attachment of glutamate to tRNA(Glu) in a two-step reaction: glutamate is first activated by ATP to form Glu-AMP and then transferred to the acceptor end of tRNA(Glu). The protein is Glutamate--tRNA ligase of Roseiflexus sp. (strain RS-1).